Here is a 504-residue protein sequence, read N- to C-terminus: Ribose import ATP-binding protein RbsA (504 aa).

ABC transporter domains follow at residues 6–242 (LELK…VGRR) and 252–495 (VRHG…VGKT). 38–45 (GENGAGKS) provides a ligand contact to ATP.

This sequence belongs to the ABC transporter superfamily. Ribose importer (TC 3.A.1.2.1) family. As to quaternary structure, the complex is composed of an ATP-binding protein (RbsA), two transmembrane proteins (RbsC) and a solute-binding protein (RbsB).

The protein resides in the cell inner membrane. The enzyme catalyses D-ribose(out) + ATP + H2O = D-ribose(in) + ADP + phosphate + H(+). In terms of biological role, part of the ABC transporter complex RbsABC involved in ribose import. Responsible for energy coupling to the transport system. The protein is Ribose import ATP-binding protein RbsA of Photobacterium profundum (strain SS9).